Consider the following 299-residue polypeptide: Probable GTP 3',8-cyclase (299 aa).

The Radical SAM core domain maps to 4–229; the sequence is LHNREIKSLR…MQNRKKYLVD (226 aa). Arginine 13 provides a ligand contact to GTP. 2 residues coordinate [4Fe-4S] cluster: cysteine 20 and cysteine 24. Tyrosine 26 provides a ligand contact to S-adenosyl-L-methionine. Residue cysteine 27 coordinates [4Fe-4S] cluster. Lysine 61 lines the GTP pocket. Glycine 65 contacts S-adenosyl-L-methionine. Residue threonine 94 participates in GTP binding. Serine 118 is an S-adenosyl-L-methionine binding site. Position 154 (lysine 154) interacts with GTP. Cysteine 245 and cysteine 248 together coordinate [4Fe-4S] cluster. 250–252 is a binding site for GTP; that stretch reads RIR. Cysteine 262 lines the [4Fe-4S] cluster pocket.

It belongs to the radical SAM superfamily. MoaA family. Requires [4Fe-4S] cluster as cofactor.

It carries out the reaction GTP + AH2 + S-adenosyl-L-methionine = (8S)-3',8-cyclo-7,8-dihydroguanosine 5'-triphosphate + 5'-deoxyadenosine + L-methionine + A + H(+). The protein operates within cofactor biosynthesis; molybdopterin biosynthesis. Its function is as follows. Catalyzes the cyclization of GTP to (8S)-3',8-cyclo-7,8-dihydroguanosine 5'-triphosphate. This is Probable GTP 3',8-cyclase from Methanococcus aeolicus (strain ATCC BAA-1280 / DSM 17508 / OCM 812 / Nankai-3).